Reading from the N-terminus, the 680-residue chain is Nodulation protein NolNO (680 aa).

This sequence belongs to the NodU/CmcH family.

Its subcellular location is the cytoplasm. Its function is as follows. Involved in the O-carbamoylation of nod factors. This is Nodulation protein NolNO (nolO) from Sinorhizobium fredii (strain NBRC 101917 / NGR234).